Consider the following 907-residue polypeptide: Envelope glycoprotein B (907 aa).

A signal peptide spans 1-22 (MESRIWCLVVCVNLCIVCLGAA). Residues 23 to 751 (VSSSSTRGTS…EGVATFLKNP (729 aa)) lie on the Virion surface side of the membrane. The segment at 29–62 (RGTSATHSHHSSHTTSAAHSRSGSVSQRVTSSQT) is disordered. The segment covering 41 to 62 (HTTSAAHSRSGSVSQRVTSSQT) has biased composition (low complexity). N-linked (GlcNAc...) asparagine; by host glycans are attached at residues Asn68, Asn73, and Asn85. 4 cysteine pairs are disulfide-bonded: Cys94/Cys551, Cys111/Cys507, Cys185/Cys250, and Cys344/Cys391. Residues 152 to 158 (SYAYIHT) are involved in fusion and/or binding to host membrane. A glycan (N-linked (GlcNAc...) asparagine; by host) is linked at Asn208. The involved in fusion and/or binding to host membrane stretch occupies residues 237–244 (GSTWLYRE). N-linked (GlcNAc...) asparagine; by host glycosylation is found at Asn281, Asn286, Asn302, Asn341, Asn383, Asn405, Asn409, Asn417, Asn447, Asn452, Asn456, Asn466, Asn555, and Asn586. The cysteines at positions 574 and 611 are disulfide-linked. 2 hydrophobic membrane proximal region regions span residues 697 to 749 (VEDK…TFLK) and 708 to 748 (YLKG…ATFL). Residues 752–772 (FGAFTIILVAIAVVIIIYLIY) form a helical membrane-spanning segment. The Intravirion portion of the chain corresponds to 773 to 907 (TRQRRLCMQP…LKDSDEEENV (135 aa)). 2 stretches are compositionally biased toward polar residues: residues 798–810 (VTSG…SLQA) and 860–877 (RAQQ…GTQD). Disordered stretches follow at residues 798–838 (VTSG…TAAP) and 860–907 (RAQQ…EENV). Basic and acidic residues predominate over residues 878-887 (KGQKPNLLDR). The short motif at 895 to 898 (YRHL) is the Internalization motif element.

It belongs to the herpesviridae glycoprotein B family. In terms of assembly, homotrimer; disulfide-linked. Binds to heparan sulfate proteoglycans. Interacts with gH/gL heterodimer. Interacts with host C-type lectin CD209/DC-SIGN. Interacts with host ITGB1, EGFR, and PDGFRA. Post-translationally, a proteolytic cleavage by host furin generates two subunits that remain linked by disulfide bonds.

It is found in the virion membrane. The protein resides in the host cell membrane. It localises to the host endosome membrane. Its subcellular location is the host Golgi apparatus membrane. In terms of biological role, envelope glycoprotein that plays a role in host cell entry, cell to-cell virus transmission, and fusion of infected cells. May be involved in the initial attachment via binding to heparan sulfate together with the gM/gN complex that binds heparin with higher affinity. Interacts with host integrin ITGB1, PDGFRA and EGFR that likely serve as postattachment entry receptors. Also participates in the fusion of viral and cellular membranes leading to virus entry into the host cell. Membrane fusion is mediated by the fusion machinery composed at least of gB and the heterodimer gH/gL. The polypeptide is Envelope glycoprotein B (Homo sapiens (Human)).